The sequence spans 118 residues: D-dopachrome decarboxylase-B (118 aa).

Proline 2 is modified (N-acetylproline).

It belongs to the MIF family. In terms of assembly, homotrimer.

The protein resides in the cytoplasm. It carries out the reaction D-dopachrome + H(+) = 5,6-dihydroxyindole + CO2. Its function is as follows. Tautomerization of D-dopachrome with decarboxylation to give 5,6-dihydroxyindole (DHI). The chain is D-dopachrome decarboxylase-B (ddt-b) from Xenopus laevis (African clawed frog).